The sequence spans 66 residues: Alpha-bisabolene synthase (66 aa).

This sequence belongs to the terpene synthase family. Tpsd subfamily. Mn(2+) serves as cofactor. It depends on K(+) as a cofactor.

The protein localises to the cytoplasm. It catalyses the reaction (2E,6E)-farnesyl diphosphate = (E,R)-alpha-bisabolene + diphosphate. It participates in terpene metabolism; oleoresin biosynthesis. In terms of biological role, involved in defensive oleoresin formation in conifers in response to insect attack or other injury. Involved in sesquiterpene (C15) olefins biosynthesis. In Pseudotsuga menziesii (Douglas-fir), this protein is Alpha-bisabolene synthase.